A 549-amino-acid polypeptide reads, in one-letter code: Probable protein kinase UbiB (549 aa).

Residues 123–504 enclose the Protein kinase domain; that stretch reads DFDETALASA…QRNNTGFSRL (382 aa). ATP is bound by residues 129–137 and Lys-156; that span reads LASASIAQV. The Proton acceptor role is filled by Asp-291. Residues 505-525 traverse the membrane as a helical segment; that stretch reads MILGIAIAGTFWKFEMLPLWV.

Belongs to the ABC1 family. UbiB subfamily.

It localises to the cell inner membrane. Its pathway is cofactor biosynthesis; ubiquinone biosynthesis [regulation]. Is probably a protein kinase regulator of UbiI activity which is involved in aerobic coenzyme Q (ubiquinone) biosynthesis. The chain is Probable protein kinase UbiB from Glaesserella parasuis serovar 5 (strain SH0165) (Haemophilus parasuis).